Here is a 245-residue protein sequence, read N- to C-terminus: MRKGYIYVIENNFDNHVYIGSTVDSLENRFRRHKADALKRPSCLFHTYMKKHGVDNFVIKLLKEVEIISILDLHLLEQNFIKDYGTLNTLHGKLKNLEINDKPTNVVLSKQTPFFTTIEPNIVKTEDVLKEITTNPSISLKELIDIFIEEEQNFGTILNEMTCQHKIYISKKLLKWIGYEGDYKKQRDSFKKLLKRHNIDFEELKSNDIECENYPEIKVDMANLSNGVISQSKWLILNIYNFKYI.

The region spanning 2–97 (RKGYIYVIEN…NTLHGKLKNL (96 aa)) is the GIY-YIG domain.

The chain is Putative MSV199 domain-containing protein 146R from Acheta domesticus (House cricket).